We begin with the raw amino-acid sequence, 393 residues long: 1-deoxy-D-xylulose 5-phosphate reductoisomerase (393 aa).

Thr10, Gly11, Ser12, Ile13, Gln38, and Asn124 together coordinate NADPH. 1-deoxy-D-xylulose 5-phosphate is bound at residue Lys125. Glu126 is a binding site for NADPH. Asp150 provides a ligand contact to Mn(2+). 4 residues coordinate 1-deoxy-D-xylulose 5-phosphate: Ser151, Glu152, Ser179, and His202. A Mn(2+)-binding site is contributed by Glu152. Gly208 contacts NADPH. 4 residues coordinate 1-deoxy-D-xylulose 5-phosphate: Ser215, Asn220, Lys221, and Glu224. Glu224 lines the Mn(2+) pocket.

Belongs to the DXR family. Mg(2+) is required as a cofactor. It depends on Mn(2+) as a cofactor.

The enzyme catalyses 2-C-methyl-D-erythritol 4-phosphate + NADP(+) = 1-deoxy-D-xylulose 5-phosphate + NADPH + H(+). It participates in isoprenoid biosynthesis; isopentenyl diphosphate biosynthesis via DXP pathway; isopentenyl diphosphate from 1-deoxy-D-xylulose 5-phosphate: step 1/6. Its function is as follows. Catalyzes the NADPH-dependent rearrangement and reduction of 1-deoxy-D-xylulose-5-phosphate (DXP) to 2-C-methyl-D-erythritol 4-phosphate (MEP). The chain is 1-deoxy-D-xylulose 5-phosphate reductoisomerase from Ralstonia nicotianae (strain ATCC BAA-1114 / GMI1000) (Ralstonia solanacearum).